The sequence spans 100 residues: uncharacterized protein (100 aa).

The segment at 40–100 is disordered; that stretch reads GDQMARKATS…DPTKNKSGRG (61 aa).

This is an uncharacterized protein from Mycobacterium tuberculosis (strain ATCC 25618 / H37Rv).